An 85-amino-acid polypeptide reads, in one-letter code: Defensin-like protein 11 (85 aa).

The N-terminal stretch at 1 to 29 (MGKTISFSAIILVFLLVSTGLMKQGDAQA) is a signal peptide. Cystine bridges form between C32-C84, C44-C68, C54-C75, and C58-C77.

It belongs to the DEFL family.

It localises to the secreted. The sequence is that of Defensin-like protein 11 from Arabidopsis thaliana (Mouse-ear cress).